A 116-amino-acid polypeptide reads, in one-letter code: NADH-quinone oxidoreductase subunit A (116 aa).

3 helical membrane-spanning segments follow: residues 3-23, 61-81, and 85-105; these read FTLL…ALGI, FAIL…WAVV, and LGVY…LGLA.

Belongs to the complex I subunit 3 family. As to quaternary structure, NDH-1 is composed of 14 different subunits. Subunits NuoA, H, J, K, L, M, N constitute the membrane sector of the complex.

It localises to the cell inner membrane. It catalyses the reaction a quinone + NADH + 5 H(+)(in) = a quinol + NAD(+) + 4 H(+)(out). NDH-1 shuttles electrons from NADH, via FMN and iron-sulfur (Fe-S) centers, to quinones in the respiratory chain. The immediate electron acceptor for the enzyme in this species is believed to be a menaquinone. Couples the redox reaction to proton translocation (for every two electrons transferred, four hydrogen ions are translocated across the cytoplasmic membrane), and thus conserves the redox energy in a proton gradient. The protein is NADH-quinone oxidoreductase subunit A of Phocaeicola vulgatus (strain ATCC 8482 / DSM 1447 / JCM 5826 / CCUG 4940 / NBRC 14291 / NCTC 11154) (Bacteroides vulgatus).